Reading from the N-terminus, the 147-residue chain is Large ribosomal subunit protein bL9 (147 aa).

Belongs to the bacterial ribosomal protein bL9 family.

In terms of biological role, binds to the 23S rRNA. The chain is Large ribosomal subunit protein bL9 from Halalkalibacterium halodurans (strain ATCC BAA-125 / DSM 18197 / FERM 7344 / JCM 9153 / C-125) (Bacillus halodurans).